We begin with the raw amino-acid sequence, 197 residues long: uncharacterized protein (197 aa).

Residues aspartate 29–aspartate 166 enclose the PfpI endopeptidase domain. Cysteine 98 acts as the Nucleophile in catalysis.

The protein belongs to the peptidase C56 family.

This is an uncharacterized protein from Bacillus subtilis (strain 168).